Reading from the N-terminus, the 148-residue chain is Putative nickel-responsive regulator (148 aa).

Ni(2+) is bound by residues histidine 88, histidine 99, histidine 101, and cysteine 107.

Belongs to the transcriptional regulatory CopG/NikR family. The cofactor is Ni(2+).

In terms of biological role, transcriptional regulator. This is Putative nickel-responsive regulator from Helicobacter pylori (strain HPAG1).